The sequence spans 167 residues: SsrA-binding protein (167 aa).

Basic and acidic residues predominate over residues 139 to 158 (QNHDKRDAAKERDWQRDKQR). A disordered region spans residues 139-167 (QNHDKRDAAKERDWQRDKQRVMRRHNRDA).

This sequence belongs to the SmpB family.

It localises to the cytoplasm. Required for rescue of stalled ribosomes mediated by trans-translation. Binds to transfer-messenger RNA (tmRNA), required for stable association of tmRNA with ribosomes. tmRNA and SmpB together mimic tRNA shape, replacing the anticodon stem-loop with SmpB. tmRNA is encoded by the ssrA gene; the 2 termini fold to resemble tRNA(Ala) and it encodes a 'tag peptide', a short internal open reading frame. During trans-translation Ala-aminoacylated tmRNA acts like a tRNA, entering the A-site of stalled ribosomes, displacing the stalled mRNA. The ribosome then switches to translate the ORF on the tmRNA; the nascent peptide is terminated with the 'tag peptide' encoded by the tmRNA and targeted for degradation. The ribosome is freed to recommence translation, which seems to be the essential function of trans-translation. The polypeptide is SsrA-binding protein (Xanthomonas oryzae pv. oryzae (strain PXO99A)).